A 510-amino-acid chain; its full sequence is RanBP-type and C3HC4-type zinc finger-containing protein 1 (510 aa).

Position 1 is an N-acetylmethionine (methionine 1). Residues 1–220 (MDEKTKKAEE…PGCEMCCRAR (220 aa)) are interaction with IRF3. The tract at residues 1 to 270 (MDEKTKKAEE…NYLQHVQLDQ (270 aa)) is interaction with TAB2. Serine 50 is subject to Phosphoserine. Residues 55-119 (IRLWVSVEDA…DQETLHSHGV (65 aa)) enclose the Ubiquitin-like domain. The tract at residues 69-131 (VTIWLTVRPD…NGDSAYLYLL (63 aa)) is interaction with RNF31. Positions 160–192 (LTLQPRGPLEPGPPKPGVPQEPGRGQPDAVPEP) are disordered. The span at 167-178 (PLEPGPPKPGVP) shows a compositional bias: pro residues. The RanBP2-type zinc finger occupies 193–222 (PPVGWQCPGCTFINKPTRPGCEMCCRARPE). A coiled-coil region spans residues 233–261 (DEEERARLAGEEEALRQYQQRKQQQQEGN). Residues 278–506 (EPAECPVCYS…VNGIPCHPSC (229 aa)) are TRIAD supradomain. The Zn(2+) site is built by cysteine 282, cysteine 285, cysteine 300, histidine 302, cysteine 305, cysteine 308, and cysteine 323. The RING-type 1 zinc finger occupies 282–332 (CPVCYSVLAPGEAVVLRECLHTFCRECLQGTIRNSQEAEVSCPFIDNTYSC). Tyrosine 330 carries the post-translational modification Phosphotyrosine. The Zn(2+) site is built by cysteine 332, cysteine 371, cysteine 376, cysteine 391, cysteine 394, cysteine 399, cysteine 402, histidine 406, cysteine 411, cysteine 447, and cysteine 450. An IBR-type zinc finger spans residues 351–411 (QRFLDLGISI…CKAIHEQMNC (61 aa)). The RING-type 2; atypical zinc-finger motif lies at 447 to 476 (CPQCQIVVQKKDGCDWIRCTVCHTEICWVT). Residue cysteine 460 is part of the active site. Residues cysteine 465 and cysteine 468 each coordinate Zn(2+).

Belongs to the RBR family. Component of the LUBAC complex (linear ubiquitin chain assembly complex) which consists of SHARPIN, RBCK1 and RNF31. LUBAC has a MW of approximately 600 kDa suggesting a heteromultimeric assembly of its subunits. Interacts with beta-I-type (PRKCB1) and zeta-type protein kinase C (PRKCZ). Interacts with UBE2L3. Interacts with PRKCH. Associates with the TNF-R1 signaling complex (TNF-RSC) in a stimulation-dependent manner. Interacts with EYA1, TAB2, TAB3, MAP3K7 TRAF6 and RIPK1. Interacts with IRF3. As to quaternary structure, interacts with IREB2 only in iron-rich conditions. In terms of assembly, (Microbial infection) Interacts with hepatitis B virus/HBV protein HBx; this interaction is required to activate transcription of the viral genome. Auto-ubiquitinated. Auto-ubiquitination leads to degradation by the proteasome. Post-translationally, phosphorylated. In vitro, phosphorylation inhibits auto-ubiquitination activity. In terms of processing, (Microbial infection) Ubiquitinated by S.flexneri E3 ubiquitin-protein ligases IpaH1.4 and IpaH2.5, leading to its degradation by the proteasome, thereby preventing formation of the bacterial ubiquitin coat and activation of innate immunity.

It catalyses the reaction [E2 ubiquitin-conjugating enzyme]-S-ubiquitinyl-L-cysteine + [acceptor protein]-L-lysine = [E2 ubiquitin-conjugating enzyme]-L-cysteine + [acceptor protein]-N(6)-ubiquitinyl-L-lysine.. It functions in the pathway protein modification; protein ubiquitination. Its function is as follows. E3 ubiquitin-protein ligase, which accepts ubiquitin from specific E2 ubiquitin-conjugating enzymes, such as UBE2L3/UBCM4, and then transfers it to substrates. Functions as an E3 ligase for oxidized IREB2 and both heme and oxygen are necessary for IREB2 ubiquitination. Promotes ubiquitination of TAB2 and IRF3 and their degradation by the proteasome. Component of the LUBAC complex which conjugates linear ('Met-1'-linked) polyubiquitin chains to substrates and plays a key role in NF-kappa-B activation and regulation of inflammation. LUBAC conjugates linear polyubiquitin to IKBKG and RIPK1 and is involved in activation of the canonical NF-kappa-B and the JNK signaling pathways. Linear ubiquitination mediated by the LUBAC complex interferes with TNF-induced cell death and thereby prevents inflammation. LUBAC is recruited to the TNF-R1 signaling complex (TNF-RSC) following polyubiquitination of TNF-RSC components by BIRC2 and/or BIRC3 and to conjugate linear polyubiquitin to IKBKG and possibly other components contributing to the stability of the complex. The LUBAC complex is also involved in innate immunity by conjugating linear polyubiquitin chains at the surface of bacteria invading the cytosol to form the ubiquitin coat surrounding bacteria. LUBAC is not able to initiate formation of the bacterial ubiquitin coat, and can only promote formation of linear polyubiquitins on pre-existing ubiquitin. The bacterial ubiquitin coat acts as an 'eat-me' signal for xenophagy and promotes NF-kappa-B activation. Together with OTULIN, the LUBAC complex regulates the canonical Wnt signaling during angiogenesis. Binds polyubiquitin of different linkage types. This Homo sapiens (Human) protein is RanBP-type and C3HC4-type zinc finger-containing protein 1 (RBCK1).